The following is a 699-amino-acid chain: Elongation factor G (699 aa).

Positions 8 to 288 (EDYRNFGIMA…AVVDYLPSPL (281 aa)) constitute a tr-type G domain. Residues 17–24 (AHIDAGKT), 86–90 (DTPGH), and 140–143 (NKMD) contribute to the GTP site.

The protein belongs to the TRAFAC class translation factor GTPase superfamily. Classic translation factor GTPase family. EF-G/EF-2 subfamily.

It localises to the cytoplasm. In terms of biological role, catalyzes the GTP-dependent ribosomal translocation step during translation elongation. During this step, the ribosome changes from the pre-translocational (PRE) to the post-translocational (POST) state as the newly formed A-site-bound peptidyl-tRNA and P-site-bound deacylated tRNA move to the P and E sites, respectively. Catalyzes the coordinated movement of the two tRNA molecules, the mRNA and conformational changes in the ribosome. This chain is Elongation factor G, found in Rhizobium etli (strain CIAT 652).